The following is an 86-amino-acid chain: Trypsin inhibitor (86 aa).

Intrachain disulfides connect Cys-8–Cys-65 and Cys-49–Cys-58.

Its function is as follows. Serine protease inhibitor which is active against trypsin. Displays strong antifungal activity against a number of phytopathogenic fungi including M.melonis, A.cucumerina, A.solani, C.glaeosporioides and P.capsici. This is Trypsin inhibitor from Fagopyrum tataricum (Tartarian buckwheat).